Consider the following 571-residue polypeptide: Carboxylesterase 3 (571 aa).

A signal peptide spans methionine 1–alanine 26. A disulfide bridge connects residues cysteine 97 and cysteine 124. Residue asparagine 105 is glycosylated (N-linked (GlcNAc...) asparagine). Serine 229 acts as the Acyl-ester intermediate in catalysis. A disulfide bridge links cysteine 281 with cysteine 292. Active-site charge relay system residues include glutamate 347 and histidine 460. The short motif at glutamine 568–leucine 571 is the Prevents secretion from ER element.

It belongs to the type-B carboxylesterase/lipase family. Post-translationally, N-glycosylated. In terms of tissue distribution, expressed in liver, colon and small intestine.

It localises to the endoplasmic reticulum lumen. It catalyses the reaction a carboxylic ester + H2O = an alcohol + a carboxylate + H(+). Involved in the detoxification of xenobiotics and in the activation of ester and amide prodrugs. Shows low catalytic efficiency for hydrolysis of CPT-11 (7-ethyl-10-[4-(1-piperidino)-1-piperidino]-carbonyloxycamptothecin), a prodrug for camptothecin used in cancer therapeutics. This chain is Carboxylesterase 3 (CES3), found in Homo sapiens (Human).